The following is a 242-amino-acid chain: UDP-2,3-diacylglucosamine hydrolase (242 aa).

Mn(2+) contacts are provided by aspartate 7, histidine 9, aspartate 40, asparagine 78, and histidine 113. Residue 78–79 (NR) participates in substrate binding. Substrate-binding residues include aspartate 121, serine 159, threonine 163, lysine 166, and histidine 194. 2 residues coordinate Mn(2+): histidine 194 and histidine 196.

Belongs to the LpxH family. Requires Mn(2+) as cofactor.

The protein resides in the cell inner membrane. The enzyme catalyses UDP-2-N,3-O-bis[(3R)-3-hydroxytetradecanoyl]-alpha-D-glucosamine + H2O = 2-N,3-O-bis[(3R)-3-hydroxytetradecanoyl]-alpha-D-glucosaminyl 1-phosphate + UMP + 2 H(+). The protein operates within glycolipid biosynthesis; lipid IV(A) biosynthesis; lipid IV(A) from (3R)-3-hydroxytetradecanoyl-[acyl-carrier-protein] and UDP-N-acetyl-alpha-D-glucosamine: step 4/6. Hydrolyzes the pyrophosphate bond of UDP-2,3-diacylglucosamine to yield 2,3-diacylglucosamine 1-phosphate (lipid X) and UMP by catalyzing the attack of water at the alpha-P atom. Involved in the biosynthesis of lipid A, a phosphorylated glycolipid that anchors the lipopolysaccharide to the outer membrane of the cell. The polypeptide is UDP-2,3-diacylglucosamine hydrolase (Ectopseudomonas mendocina (strain ymp) (Pseudomonas mendocina)).